The primary structure comprises 146 residues: Large ribosomal subunit protein uL15y (146 aa).

Basic residues-rich tracts occupy residues 1-14 and 21-30; these read MATALKKNRKKRGH and RIGKHRKHPG. The disordered stretch occupies residues 1-38; the sequence is MATALKKNRKKRGHVSAGHGRIGKHRKHPGGRGNAGGM.

It belongs to the universal ribosomal protein uL15 family.

This chain is Large ribosomal subunit protein uL15y (RPL27AB), found in Arabidopsis thaliana (Mouse-ear cress).